The chain runs to 258 residues: Short-chain dehydrogenase/reductase aba4 (258 aa).

Positions 20, 66, and 130 each coordinate NADP(+). Active-site proton donor residues include Ser146 and Tyr160. Residues Tyr160, Lys164, Ile193, and Thr195 each coordinate NADP(+). The active-site Lowers pKa of active site Tyr is Lys164.

The protein belongs to the short-chain dehydrogenases/reductases (SDR) family.

It participates in hormone biosynthesis. Short-chain dehydrogenase/reductase; part of the gene cluster that mediates the biosynthesis of abscisic acid (ABA), a phytohormone that acts antagonistically toward salicylic acid (SA), jasmonic acid (JA) and ethylene (ETH) signaling, to impede plant defense responses. The first step of the pathway catalyzes the reaction from farnesyl diphosphate to alpha-ionylideneethane performed by the alpha-ionylideneethane synthase aba3 via a three-step reaction mechanism involving 2 neutral intermediates, beta-farnesene and allofarnesene. The cytochrome P450 monooxygenase aba1 might then be involved in the conversion of alpha-ionylideneethane to alpha-ionylideneacetic acid. Alpha-ionylideneacetic acid is further converted to abscisic acid in 2 steps involving the cytochrome P450 monooxygenase aba2 and the short-chain dehydrogenase/reductase aba4, via the intermediates 1'-deoxy-ABA or 1',4'-trans-diol-ABA, depending on the order of action of these 2 enzymes. Aba2 is responsible for the hydroxylation of carbon atom C-1' and aba4 might be involved in the oxidation of the C-4' carbon atom. The sequence is that of Short-chain dehydrogenase/reductase aba4 from Botryotinia fuckeliana (Noble rot fungus).